Here is a 138-residue protein sequence, read N- to C-terminus: Mediator of RNA polymerase II transcription subunit 22 (138 aa).

A coiled-coil region spans residues 13 to 40 (LKSYNSRLKEDIRSMRENFEEIIRLAKG).

It belongs to the Mediator complex subunit 22 family. As to quaternary structure, component of the Mediator complex.

The protein localises to the nucleus. Functionally, component of the Mediator complex, a coactivator involved in the regulated transcription of nearly all RNA polymerase II-dependent genes. Mediator functions as a bridge to convey information from gene-specific regulatory proteins to the basal RNA polymerase II transcription machinery. Mediator is recruited to promoters by direct interactions with regulatory proteins and serves as a scaffold for the assembly of a functional preinitiation complex with RNA polymerase II and the general transcription factors. The chain is Mediator of RNA polymerase II transcription subunit 22 (MED22) from Anopheles gambiae (African malaria mosquito).